The following is a 178-amino-acid chain: RNA-binding protein (178 aa).

The segment at 108-178 (SGFQKPKIGS…KGKGRRGGKR (71 aa)) is disordered. Residues 168–178 (SKGKGRRGGKR) show a composition bias toward basic residues.

This sequence belongs to the phytoreovirus RNA-binding protein family.

The protein resides in the host cytoplasm. Constituent of viral factories. Binds to ssRNA and dsRNA. The protein is RNA-binding protein of Wound tumor virus (strain NJ) (WTV).